A 155-amino-acid chain; its full sequence is Transcriptional repressor NrdR (155 aa).

The segment at 3–34 is a zinc-finger region; that stretch reads CPFCAANDTKVIDSRLVAEGDQVRRRRECVAC. An ATP-cone domain is found at 49 to 139; it reads PRLIKQDGSR…VYRRFQDLNE (91 aa).

It belongs to the NrdR family. Zn(2+) serves as cofactor.

Negatively regulates transcription of bacterial ribonucleotide reductase nrd genes and operons by binding to NrdR-boxes. The polypeptide is Transcriptional repressor NrdR (Ectopseudomonas mendocina (strain ymp) (Pseudomonas mendocina)).